The sequence spans 511 residues: DELLA protein RGL1 (511 aa).

Over residues 1–11 (MKREHNHRESS) the composition is skewed to basic and acidic residues. A disordered region spans residues 1-20 (MKREHNHRESSAGEGGSSSM). The DELLA motif motif lies at 32 to 36 (DELLV). The short motif at 54–58 (LEQLE) is the LEXLE motif element. Positions 73 to 77 (VHYNP) match the VHYNP motif motif. Residues 143–506 (LDSQETGVRL…RPLIATSAWR (364 aa)) form the GRAS domain. Residues 150 to 204 (VRLVHALLACAEAVQQNNLKLADALVKHVGLLASSQAGAMRKVATYFAEGLARRI) form a leucine repeat I (LRI) region. The LxCxE motif signature appears at 157–161 (LACAE). A VHIID region spans residues 223 to 288 (QIHFYESCPY…NGPPDFRLTG (66 aa)). A VHIID motif is present at residues 254–258 (VHVID). Positions 298-330 (EVGWKLGQLASTIGVNFEFKSIALNNLSDLKPE) are leucine repeat II (LRII). The PFYRE stretch occupies residues 341–427 (VAVNSVFELH…ELFLGRQILN (87 aa)). The short motif at 349–353 (LHRLL) is the LXXLL motif element. The SAW stretch occupies residues 430 to 506 (ACEGEDRVER…RPLIATSAWR (77 aa)).

The protein belongs to the GRAS family. DELLA subfamily. In terms of assembly, interacts directly with the GID2/SLY1 component of the SCF(GID2) complex. Interacts (via N-terminus) with GID1A, GID1B and GID1B (via N-terminus). Interacts with the BOI proteins BOI, BRG1, BRG2 and BRG3. Binds to and coactivates GAF1/IDD2 and ENY/IDD1. Post-translationally, phosphorylated. In terms of processing, may be ubiquitinated, as suggested by its interaction with GID2. Ubiquitination is however unsure since in contrast to other DELLA proteins, it is not ubiquitinated and degraded upon GA application. Nevertheless, ubiquitination may be triggered by other processes. Predominantly expressed in germinating seeds and flowers and siliques. Highly expressed in inflorescences and weakly or not expressed in rosette leaves, etiolated seedlings, siliques, mature stems and roots. RGA and GAI transcripts were detected at slightly varying levels in all tissues examined. RGL2 signal was undetected, and RGL3 signal was very weak in all tissues examined (rosette leaves, seedlings, inflorescences, and siliques) except inflorescences. In the flower, it is expressed in developing ovules as well as in developing anthers throughout microspore development.

The protein resides in the nucleus. In terms of biological role, probable transcriptional regulator that acts as a repressor of the gibberellin (GA) signaling pathway. No effect of the BOI proteins on its stability. Probably acts by participating in large multiprotein complexes that repress transcription of GA-inducible genes. Has overlapping but distinct roles in GA signaling compared to RGA and GAI. Regulates the floral development. May also participate in seed germination and in ovule and anther development. Its activity is probably regulated by other phytohormones such as auxin and ethylene. The polypeptide is DELLA protein RGL1 (RGL1) (Arabidopsis thaliana (Mouse-ear cress)).